The following is a 166-amino-acid chain: Anterior gradient protein 3 (166 aa).

Positions 1–21 (MMLHSALGLCLLLVTVSSNLA) are cleaved as a signal peptide. The Prevents secretion from ER signature appears at 163-166 (QSEL).

This sequence belongs to the AGR family. In terms of assembly, interacts with LYPD3 and DAG1 (alphaDAG1). In terms of tissue distribution, expressed in the lung, in the ciliated cells of the airway epithelium. Expression increased with differentiation of airway epithelial cells. Not detected in the mucous cells. Expressed in ciliated cells in the oviduct. Also detected in stomach, colon, prostate and liver. Expressed in breast, ovary, prostate and liver cancer. Expression is associated with the level of differentiation of breast cancer (at protein level).

It is found in the endoplasmic reticulum. Its function is as follows. Required for calcium-mediated regulation of ciliary beat frequency and mucociliary clearance in the airway. Might be involved in the regulation of intracellular calcium in tracheal epithelial cells. The chain is Anterior gradient protein 3 (AGR3) from Homo sapiens (Human).